Here is a 306-residue protein sequence, read N- to C-terminus: Oxygen-dependent coproporphyrinogen-III oxidase (306 aa).

Ser99 contacts substrate. Residues His103 and His113 each contribute to the a divalent metal cation site. His113 functions as the Proton donor in the catalytic mechanism. Residue 115–117 participates in substrate binding; that stretch reads NVR. Positions 152 and 182 each coordinate a divalent metal cation. Residues 247–282 are important for dimerization; the sequence is YVEFNLVFDRGTLFGLQSGGRTESILMSMPPVANWR. 265–267 is a binding site for substrate; the sequence is GGR.

Belongs to the aerobic coproporphyrinogen-III oxidase family. In terms of assembly, homodimer. A divalent metal cation is required as a cofactor.

It localises to the cytoplasm. The catalysed reaction is coproporphyrinogen III + O2 + 2 H(+) = protoporphyrinogen IX + 2 CO2 + 2 H2O. Its pathway is porphyrin-containing compound metabolism; protoporphyrin-IX biosynthesis; protoporphyrinogen-IX from coproporphyrinogen-III (O2 route): step 1/1. Involved in the heme biosynthesis. Catalyzes the aerobic oxidative decarboxylation of propionate groups of rings A and B of coproporphyrinogen-III to yield the vinyl groups in protoporphyrinogen-IX. The chain is Oxygen-dependent coproporphyrinogen-III oxidase from Burkholderia ambifaria (strain MC40-6).